A 533-amino-acid polypeptide reads, in one-letter code: Di/tripeptide-binding protein 4 (533 aa).

Residues 1 to 25 form the signal peptide; it reads MLHPLLRHLPLALALALCAAGAAQA.

It belongs to the bacterial solute-binding protein 5 family. As to quaternary structure, the complex is composed of two ATP-binding proteins (DppD and DppF), two transmembrane proteins (DppB and DppC) and a solute-binding protein (DppA4). Five orthologous SBPs (DppA1-A5) are present in P.aeruginosa, which increases the substrate specificity of the DppBCDF transporter.

Part of the ABC transporter DppABCDF involved in the uptake of various di/tripeptides. Prefers dipeptides with acidic residues at the C-terminal end. Efficiently uses tripeptides. This is Di/tripeptide-binding protein 4 from Pseudomonas aeruginosa (strain UCBPP-PA14).